We begin with the raw amino-acid sequence, 443 residues long: Probable glucomannan 4-beta-mannosyltransferase 11 (443 aa).

Residue D52 is part of the active site. Residues D111 and D113 each coordinate substrate. The active site involves D205. 4 consecutive transmembrane segments (helical) span residues 284–304 (IIVH…SVFF), 321–341 (ITLF…FWVL), 400–420 (EMMV…FGKT), and 421–441 (VLYI…IGFI).

It belongs to the glycosyltransferase 2 family. Plant cellulose synthase-like A subfamily.

It is found in the golgi apparatus membrane. It catalyses the reaction GDP-mannose + (glucomannan)n = GDP + (glucomannan)n+1.. Functionally, probable mannan synthase which consists of a 4-beta-mannosyltransferase activity on mannan using GDP-mannose. The beta-1,4-mannan product is the backbone for galactomannan synthesis by galactomannan galactosyltransferase. Galactomannan is a noncellulosic polysaccharides of plant cell wall. The protein is Probable glucomannan 4-beta-mannosyltransferase 11 of Arabidopsis thaliana (Mouse-ear cress).